The chain runs to 60 residues: Cytotoxin 1 (60 aa).

4 disulfides stabilise this stretch: C3–C21, C14–C38, C42–C53, and C54–C59.

Belongs to the three-finger toxin family. Short-chain subfamily. Type IA cytotoxin sub-subfamily. In terms of assembly, monomer in solution; Homodimer and oligomer in the presence of negatively charged lipids forming a pore with a size ranging between 20 and 30 Angstroms. In terms of tissue distribution, expressed by the venom gland.

It is found in the secreted. It localises to the target cell membrane. Produces complete blockade of auricular contraction, which is irreversible at high concentrations. Induces apoptosis in leukemic cells. Possesses anti-arthritic and anti-inflammatory potential. The sequence is that of Cytotoxin 1 from Naja kaouthia (Monocled cobra).